The chain runs to 599 residues: Aspartate--tRNA ligase (599 aa).

E180 lines the L-aspartate pocket. An aspartate region spans residues 204 to 207; it reads QIFK. L-aspartate is bound at residue R226. ATP is bound by residues 226–228 and Q235; that span reads RDE. Residue H454 coordinates L-aspartate. E488 contributes to the ATP binding site. Position 495 (R495) interacts with L-aspartate. ATP is bound at residue 540 to 543; that stretch reads GLDR.

Belongs to the class-II aminoacyl-tRNA synthetase family. Type 1 subfamily. As to quaternary structure, homodimer.

Its subcellular location is the cytoplasm. The catalysed reaction is tRNA(Asp) + L-aspartate + ATP = L-aspartyl-tRNA(Asp) + AMP + diphosphate. Its function is as follows. Catalyzes the attachment of L-aspartate to tRNA(Asp) in a two-step reaction: L-aspartate is first activated by ATP to form Asp-AMP and then transferred to the acceptor end of tRNA(Asp). In Clostridium beijerinckii (strain ATCC 51743 / NCIMB 8052) (Clostridium acetobutylicum), this protein is Aspartate--tRNA ligase.